We begin with the raw amino-acid sequence, 595 residues long: Anthranilate synthase alpha subunit 1, chloroplastic (595 aa).

The N-terminal 54 residues, 1–54 (MSSSMNVATMQALTFSRRLLPSVASRYLSSSSVTVTGYSGRSSAYAPSFRSIKC), are a transit peptide targeting the chloroplast. Residue V55 is modified to N-acetylvaline. Residues S115 and 356–358 (PYM) contribute to the L-tryptophan site. Residue 391 to 392 (GT) coordinates chorismate. E418 contributes to the Mg(2+) binding site. Chorismate-binding positions include Y506, R526, 558–560 (GAG), and G560. Mg(2+) is bound at residue E573.

The protein belongs to the anthranilate synthase component I family. Heterotetramer consisting of two non-identical subunits: a beta subunit and a large alpha subunit. Mg(2+) is required as a cofactor. Expressed in the central cylinder of mature primary root zones, including pericycle and early lateral root primordia, and vasculature of cotyledons.

It localises to the plastid. It is found in the chloroplast. The enzyme catalyses chorismate + L-glutamine = anthranilate + pyruvate + L-glutamate + H(+). It participates in amino-acid biosynthesis; L-tryptophan biosynthesis; L-tryptophan from chorismate: step 1/5. With respect to regulation, feedback inhibition by tryptophan. Functionally, part of a heterotetrameric complex that catalyzes the two-step biosynthesis of anthranilate, an intermediate in the biosynthesis of L-tryptophan. In the first step, the glutamine-binding beta subunit of anthranilate synthase (AS) provides the glutamine amidotransferase activity which generates ammonia as a substrate that, along with chorismate, is used in the second step, catalyzed by the large alpha subunit of AS to produce anthranilate. Plays an important regulatory role in auxin production via the tryptophan-dependent biosynthetic pathway. The protein is Anthranilate synthase alpha subunit 1, chloroplastic (ASA1) of Arabidopsis thaliana (Mouse-ear cress).